The following is a 331-amino-acid chain: Lactamase-like protein nscB (331 aa).

The Zn(2+) site is built by histidine 106, histidine 108, aspartate 110, and histidine 111. The active-site Proton donor/acceptor is the aspartate 110.

The protein belongs to the metallo-beta-lactamase superfamily. The cofactor is Zn(2+).

The protein operates within secondary metabolite biosynthesis. Lactamase-like protein; part of the gene cluster that mediates the biosynthesis of neosartoricin B, a prenylated anthracenone that probably exhibits T-cell antiproliferative activity, suggestive of a physiological role as an immunosuppressive agent. The non-reducing polyketide synthase nscA probably synthesizes and cyclizes the decaketide backbone. The hydrolase nscB then mediates the product release through hydrolysis followed by spontaneous decarboxylation. The prenyltransferase nscD catalyzes the addition of the dimethylallyl group to the aromatic C5. The FAD-dependent monooxygenase nscC is then responsible for the stereospecific hydroxylation at C2. Neosartoricin B can be converted into two additional compounds neosartoricins C and D. Neosartoricin C is a spirocyclic compound that is cyclized through the attack of C3 hydroxyl on C14, followed by dehydration. On the other hand, neosartoricin D is a further cyclized compound in which attack of C2 on C14 in neosartoricin C results in the formation of the acetal-containing dioxabicyclo-octanone ring. Both of these compounds are novel and possibly represent related metabolites of the gene cluster. The polypeptide is Lactamase-like protein nscB (Trichophyton equinum (strain ATCC MYA-4606 / CBS 127.97) (Horse ringworm fungus)).